The following is an 821-amino-acid chain: LPS-assembly protein LptD (821 aa).

The signal sequence occupies residues 1–20 (MGKRLFWTALSGLMVSAAHA).

It belongs to the LptD family. As to quaternary structure, component of the lipopolysaccharide transport and assembly complex. Interacts with LptE and LptA.

Its subcellular location is the cell outer membrane. In terms of biological role, together with LptE, is involved in the assembly of lipopolysaccharide (LPS) at the surface of the outer membrane. This chain is LPS-assembly protein LptD, found in Chromohalobacter salexigens (strain ATCC BAA-138 / DSM 3043 / CIP 106854 / NCIMB 13768 / 1H11).